The sequence spans 86 residues: Small ribosomal subunit protein uS15 (86 aa).

Belongs to the universal ribosomal protein uS15 family. In terms of assembly, part of the 30S ribosomal subunit. Forms a bridge to the 50S subunit in the 70S ribosome, contacting the 23S rRNA.

In terms of biological role, one of the primary rRNA binding proteins, it binds directly to 16S rRNA where it helps nucleate assembly of the platform of the 30S subunit by binding and bridging several RNA helices of the 16S rRNA. Functionally, forms an intersubunit bridge (bridge B4) with the 23S rRNA of the 50S subunit in the ribosome. The sequence is that of Small ribosomal subunit protein uS15 from Mycoplasma genitalium (strain ATCC 33530 / DSM 19775 / NCTC 10195 / G37) (Mycoplasmoides genitalium).